The sequence spans 61 residues: Inner membrane protein p12 (61 aa).

Residues 16 to 36 (LLIVAIIVVIMAIMLYYFWWM) form a helical membrane-spanning segment.

This sequence belongs to the asfivirus inner membrane protein p12 family. Homomultimer; disulfide-linked. In terms of processing, not glycosylated.

The protein resides in the virion membrane. In Ornithodoros (relapsing fever ticks), this protein is Inner membrane protein p12.